The chain runs to 457 residues: Serine--tRNA ligase (457 aa).

252–254 contacts L-serine; that stretch reads TAE. Residues 283–285 and V299 each bind ATP; that span reads RKE. E306 contributes to the L-serine binding site. Position 370-373 (370-373) interacts with ATP; that stretch reads EMVS. An L-serine-binding site is contributed by T406.

It belongs to the class-II aminoacyl-tRNA synthetase family. Type-1 seryl-tRNA synthetase subfamily. In terms of assembly, homodimer. The tRNA molecule binds across the dimer.

Its subcellular location is the cytoplasm. The enzyme catalyses tRNA(Ser) + L-serine + ATP = L-seryl-tRNA(Ser) + AMP + diphosphate + H(+). The catalysed reaction is tRNA(Sec) + L-serine + ATP = L-seryl-tRNA(Sec) + AMP + diphosphate + H(+). Its pathway is aminoacyl-tRNA biosynthesis; selenocysteinyl-tRNA(Sec) biosynthesis; L-seryl-tRNA(Sec) from L-serine and tRNA(Sec): step 1/1. Its function is as follows. Catalyzes the attachment of serine to tRNA(Ser). Is also able to aminoacylate tRNA(Sec) with serine, to form the misacylated tRNA L-seryl-tRNA(Sec), which will be further converted into selenocysteinyl-tRNA(Sec). The chain is Serine--tRNA ligase from Saccharolobus islandicus (strain Y.G.57.14 / Yellowstone #1) (Sulfolobus islandicus).